The primary structure comprises 275 residues: Large ribosomal subunit protein uL2c (275 aa).

A disordered region spans residues 223–255 (VVMNPVDHPHGGGEGRAPIGRSRPVTPWGRPAL).

Belongs to the universal ribosomal protein uL2 family. In terms of assembly, part of the 50S ribosomal subunit.

It is found in the plastid. The protein localises to the chloroplast. The protein is Large ribosomal subunit protein uL2c (rpl2) of Pleurastrum terricola (Filamentous green alga).